The chain runs to 220 residues: Ribosomal RNA large subunit methyltransferase E (220 aa).

S-adenosyl-L-methionine contacts are provided by Gly-60, Trp-62, Asp-92, Asp-108, and Asp-133. Catalysis depends on Lys-173, which acts as the Proton acceptor.

The protein belongs to the class I-like SAM-binding methyltransferase superfamily. RNA methyltransferase RlmE family.

The protein resides in the cytoplasm. The catalysed reaction is uridine(2552) in 23S rRNA + S-adenosyl-L-methionine = 2'-O-methyluridine(2552) in 23S rRNA + S-adenosyl-L-homocysteine + H(+). In terms of biological role, specifically methylates the uridine in position 2552 of 23S rRNA at the 2'-O position of the ribose in the fully assembled 50S ribosomal subunit. The sequence is that of Ribosomal RNA large subunit methyltransferase E from Paraburkholderia phymatum (strain DSM 17167 / CIP 108236 / LMG 21445 / STM815) (Burkholderia phymatum).